Consider the following 100-residue polypeptide: NADH-quinone oxidoreductase subunit K 2 (100 aa).

The next 3 helical transmembrane spans lie at 2–22 (LAIENYLILSAILFSIGTIGV), 29–49 (IVIFMCIEMMLNAVNLTFIAF), and 61–81 (FVFFVMTVAAAEAAVGLALMI).

It belongs to the complex I subunit 4L family. In terms of assembly, NDH-1 is composed of 14 different subunits. Subunits NuoA, H, J, K, L, M, N constitute the membrane sector of the complex.

It localises to the cell inner membrane. It carries out the reaction a quinone + NADH + 5 H(+)(in) = a quinol + NAD(+) + 4 H(+)(out). In terms of biological role, NDH-1 shuttles electrons from NADH, via FMN and iron-sulfur (Fe-S) centers, to quinones in the respiratory chain. The immediate electron acceptor for the enzyme in this species is believed to be ubiquinone. Couples the redox reaction to proton translocation (for every two electrons transferred, four hydrogen ions are translocated across the cytoplasmic membrane), and thus conserves the redox energy in a proton gradient. The polypeptide is NADH-quinone oxidoreductase subunit K 2 (Citrifermentans bemidjiense (strain ATCC BAA-1014 / DSM 16622 / JCM 12645 / Bem) (Geobacter bemidjiensis)).